A 200-amino-acid chain; its full sequence is MSQSDQPDSSVTQAQAEEAVRTLLRWAGEDPAREGLLDTPRRVAEAYGDWFSGYREEPRAYLERTFEEVAGYDELIVLRDISYESHCEHHMAPIIGKVHVGYLPRGKVVGISKLARVVESYARRFQVQEKMTAQIAQCIQDVLQPRGVGVVVEGAHECMTTRGIHKRGVSMVTSKMLGSFREDARTRAEFLQFIEVGGKR.

Positions 87, 90, and 158 each coordinate Zn(2+).

This sequence belongs to the GTP cyclohydrolase I family. As to quaternary structure, toroid-shaped homodecamer, composed of two pentamers of five dimers.

It carries out the reaction GTP + H2O = 7,8-dihydroneopterin 3'-triphosphate + formate + H(+). It participates in cofactor biosynthesis; 7,8-dihydroneopterin triphosphate biosynthesis; 7,8-dihydroneopterin triphosphate from GTP: step 1/1. The polypeptide is GTP cyclohydrolase 1 (Xanthomonas campestris pv. campestris (strain ATCC 33913 / DSM 3586 / NCPPB 528 / LMG 568 / P 25)).